A 155-amino-acid polypeptide reads, in one-letter code: 6,7-dimethyl-8-ribityllumazine synthase (155 aa).

Residues Phe-23, Ala-57–Glu-59, and Ala-81–Ile-83 each bind 5-amino-6-(D-ribitylamino)uracil. Ser-86–Thr-87 provides a ligand contact to (2S)-2-hydroxy-3-oxobutyl phosphate. Residue His-89 is the Proton donor of the active site. Residue Phe-114 participates in 5-amino-6-(D-ribitylamino)uracil binding. Arg-128 provides a ligand contact to (2S)-2-hydroxy-3-oxobutyl phosphate.

It belongs to the DMRL synthase family.

The catalysed reaction is (2S)-2-hydroxy-3-oxobutyl phosphate + 5-amino-6-(D-ribitylamino)uracil = 6,7-dimethyl-8-(1-D-ribityl)lumazine + phosphate + 2 H2O + H(+). Its pathway is cofactor biosynthesis; riboflavin biosynthesis; riboflavin from 2-hydroxy-3-oxobutyl phosphate and 5-amino-6-(D-ribitylamino)uracil: step 1/2. Functionally, catalyzes the formation of 6,7-dimethyl-8-ribityllumazine by condensation of 5-amino-6-(D-ribitylamino)uracil with 3,4-dihydroxy-2-butanone 4-phosphate. This is the penultimate step in the biosynthesis of riboflavin. The polypeptide is 6,7-dimethyl-8-ribityllumazine synthase (Geobacter sp. (strain M21)).